A 197-amino-acid polypeptide reads, in one-letter code: Holliday junction branch migration complex subunit RuvA (197 aa).

The domain I stretch occupies residues 1–61; sequence MYEYFEGTIT…ENGMTLYGFK (61 aa). Residues 62–140 form a domain II region; it reads SQQDKVLFNK…NYVAENLFTE (79 aa). The tract at residues 141–150 is flexible linker; it reads DEPVESVFPA. The domain III stretch occupies residues 150–197; sequence ALEDALLALGALGYSQKEVDRIKPKLKKLPEMSADEYIKQGLGFLLKK.

Belongs to the RuvA family. As to quaternary structure, homotetramer. Forms an RuvA(8)-RuvB(12)-Holliday junction (HJ) complex. HJ DNA is sandwiched between 2 RuvA tetramers; dsDNA enters through RuvA and exits via RuvB. An RuvB hexamer assembles on each DNA strand where it exits the tetramer. Each RuvB hexamer is contacted by two RuvA subunits (via domain III) on 2 adjacent RuvB subunits; this complex drives branch migration. In the full resolvosome a probable DNA-RuvA(4)-RuvB(12)-RuvC(2) complex forms which resolves the HJ.

The protein localises to the cytoplasm. In terms of biological role, the RuvA-RuvB-RuvC complex processes Holliday junction (HJ) DNA during genetic recombination and DNA repair, while the RuvA-RuvB complex plays an important role in the rescue of blocked DNA replication forks via replication fork reversal (RFR). RuvA specifically binds to HJ cruciform DNA, conferring on it an open structure. The RuvB hexamer acts as an ATP-dependent pump, pulling dsDNA into and through the RuvAB complex. HJ branch migration allows RuvC to scan DNA until it finds its consensus sequence, where it cleaves and resolves the cruciform DNA. This is Holliday junction branch migration complex subunit RuvA from Lactobacillus delbrueckii subsp. bulgaricus (strain ATCC BAA-365 / Lb-18).